The following is a 967-amino-acid chain: Mediator of RNA polymerase II transcription subunit 14 (967 aa).

This sequence belongs to the Mediator complex subunit 14 family. As to quaternary structure, component of the Mediator complex.

The protein localises to the nucleus. Functionally, component of the Mediator complex, a coactivator involved in the regulated transcription of nearly all RNA polymerase II-dependent genes. Mediator functions as a bridge to convey information from gene-specific regulatory proteins to the basal RNA polymerase II transcription machinery. Mediator is recruited to promoters by direct interactions with regulatory proteins and serves as a scaffold for the assembly of a functional preinitiation complex with RNA polymerase II and the general transcription factors. This is Mediator of RNA polymerase II transcription subunit 14 (RGR1) from Eremothecium gossypii (strain ATCC 10895 / CBS 109.51 / FGSC 9923 / NRRL Y-1056) (Yeast).